Here is a 123-residue protein sequence, read N- to C-terminus: Large ribosomal subunit protein bL12 (123 aa).

Belongs to the bacterial ribosomal protein bL12 family. As to quaternary structure, homodimer. Part of the ribosomal stalk of the 50S ribosomal subunit. Forms a multimeric L10(L12)X complex, where L10 forms an elongated spine to which 2 to 4 L12 dimers bind in a sequential fashion. Binds GTP-bound translation factors.

Functionally, forms part of the ribosomal stalk which helps the ribosome interact with GTP-bound translation factors. Is thus essential for accurate translation. This is Large ribosomal subunit protein bL12 from Cytophaga hutchinsonii (strain ATCC 33406 / DSM 1761 / CIP 103989 / NBRC 15051 / NCIMB 9469 / D465).